The following is a 282-amino-acid chain: Phosphatidylserine decarboxylase proenzyme (282 aa).

Residues Asp-88, His-144, and Ser-247 each act as charge relay system; for autoendoproteolytic cleavage activity in the active site. Ser-247 acts as the Schiff-base intermediate with substrate; via pyruvic acid; for decarboxylase activity in catalysis. Ser-247 is subject to Pyruvic acid (Ser); by autocatalysis.

This sequence belongs to the phosphatidylserine decarboxylase family. PSD-B subfamily. Prokaryotic type I sub-subfamily. As to quaternary structure, heterodimer of a large membrane-associated beta subunit and a small pyruvoyl-containing alpha subunit. The cofactor is pyruvate. In terms of processing, is synthesized initially as an inactive proenzyme. Formation of the active enzyme involves a self-maturation process in which the active site pyruvoyl group is generated from an internal serine residue via an autocatalytic post-translational modification. Two non-identical subunits are generated from the proenzyme in this reaction, and the pyruvate is formed at the N-terminus of the alpha chain, which is derived from the carboxyl end of the proenzyme. The autoendoproteolytic cleavage occurs by a canonical serine protease mechanism, in which the side chain hydroxyl group of the serine supplies its oxygen atom to form the C-terminus of the beta chain, while the remainder of the serine residue undergoes an oxidative deamination to produce ammonia and the pyruvoyl prosthetic group on the alpha chain. During this reaction, the Ser that is part of the protease active site of the proenzyme becomes the pyruvoyl prosthetic group, which constitutes an essential element of the active site of the mature decarboxylase.

It localises to the cell membrane. It carries out the reaction a 1,2-diacyl-sn-glycero-3-phospho-L-serine + H(+) = a 1,2-diacyl-sn-glycero-3-phosphoethanolamine + CO2. It functions in the pathway phospholipid metabolism; phosphatidylethanolamine biosynthesis; phosphatidylethanolamine from CDP-diacylglycerol: step 2/2. Functionally, catalyzes the formation of phosphatidylethanolamine (PtdEtn) from phosphatidylserine (PtdSer). This is Phosphatidylserine decarboxylase proenzyme from Xanthomonas campestris pv. campestris (strain 8004).